We begin with the raw amino-acid sequence, 385 residues long: GTP cyclohydrolase-2 (385 aa).

A DHBP synthase-like region spans residues 1-189 (MYADAPSDSA…RDIADYRVHV (189 aa)). Residues 190–385 (VRTLRRVAEA…TKAERSGHMF (196 aa)) are GTP cyclohydrolase II. 240 to 244 (RLHSE) lines the GTP pocket. Residues cysteine 245, cysteine 256, and cysteine 258 each coordinate Zn(2+). GTP-binding positions include glutamine 261, 283–285 (EGR), and threonine 305. Aspartate 317 functions as the Proton acceptor in the catalytic mechanism. Arginine 319 serves as the catalytic Nucleophile. Residues threonine 340 and lysine 345 each contribute to the GTP site.

This sequence in the N-terminal section; belongs to the DHBP synthase family. The protein in the C-terminal section; belongs to the GTP cyclohydrolase II family. The cofactor is Zn(2+).

It catalyses the reaction GTP + 4 H2O = 2,5-diamino-6-hydroxy-4-(5-phosphoribosylamino)-pyrimidine + formate + 2 phosphate + 3 H(+). Its pathway is cofactor biosynthesis; riboflavin biosynthesis; 5-amino-6-(D-ribitylamino)uracil from GTP: step 1/4. In terms of biological role, catalyzes the conversion of GTP to 2,5-diamino-6-ribosylamino-4(3H)-pyrimidinone 5'-phosphate (DARP), formate and pyrophosphate. The chain is GTP cyclohydrolase-2 (ribA) from Azospirillum brasilense.